A 338-amino-acid chain; its full sequence is Heat-inducible transcription repressor HrcA (338 aa).

This sequence belongs to the HrcA family.

In terms of biological role, negative regulator of class I heat shock genes (grpE-dnaK-dnaJ and groELS operons). Prevents heat-shock induction of these operons. This Bacillus cereus (strain B4264) protein is Heat-inducible transcription repressor HrcA.